We begin with the raw amino-acid sequence, 225 residues long: Sodium-dependent neutral amino acid transporter SLC6A17 (225 aa).

3 consecutive transmembrane segments (helical) span residues 1–8 (NVWRFPYL), 16–35 (AYLV…LFFL), and 60–80 (GIGF…NVII). The Extracellular portion of the chain corresponds to 81-143 (GWSIFYFFKS…NSISESGGLN (63 aa)). N-linked (GlcNAc...) asparagine glycosylation occurs at Asn105. A run of 3 helical transmembrane segments spans residues 144–162 (WKMT…MAVV), 171–188 (VMYF…CFLV), and 224–225 (IF).

It belongs to the sodium:neurotransmitter symporter (SNF) (TC 2.A.22) family.

It is found in the cytoplasmic vesicle. The protein resides in the secretory vesicle. It localises to the synaptic vesicle membrane. Its subcellular location is the postsynapse. The protein localises to the presynapse. It catalyses the reaction L-proline(in) + Na(+)(in) = L-proline(out) + Na(+)(out). The enzyme catalyses L-leucine(in) + Na(+)(in) = L-leucine(out) + Na(+)(out). It carries out the reaction glycine(in) + Na(+)(in) = glycine(out) + Na(+)(out). The catalysed reaction is L-alanine(in) + Na(+)(in) = L-alanine(out) + Na(+)(out). It catalyses the reaction L-glutamine(in) + Na(+)(in) = L-glutamine(out) + Na(+)(out). Functionally, synaptic vesicle transporter with apparent selectivity for neutral amino acids. The transport is sodium-coupled but chloride-independent, likely driven by the proton electrochemical gradient generated by vacuolar H(+)-ATPase in an overall electrogenic mechanism. May contribute to the synaptic uptake of neurotransmitter precursors in a process coupled in part to vesicle exocytosis. This chain is Sodium-dependent neutral amino acid transporter SLC6A17, found in Bos taurus (Bovine).